The sequence spans 385 residues: Prostacyclin receptor (385 aa).

At 1-16 the chain is on the extracellular side; the sequence is MADSCRNLTYVRDSVG. 2 cysteine pairs are disulfide-bonded: Cys-5-Cys-165 and Cys-92-Cys-170. Asn-7 carries N-linked (GlcNAc...) asparagine glycosylation. A helical transmembrane segment spans residues 17–38; it reads PATSTLMFVAGVVGNGLALGIL. The Cytoplasmic portion of the chain corresponds to 39–51; that stretch reads GARRHSRPSAFAV. The helical transmembrane segment at 52–76 threads the bilayer; that stretch reads LVTGLGVTDLLGTCFLSPAVFAAYA. Over 77 to 94 the chain is Extracellular; the sequence is RNSSLLGLARGRPALCDA. Residues 95-115 traverse the membrane as a helical segment; that stretch reads FAFAMTFFGLASTLILFAMAV. Topologically, residues 116–134 are cytoplasmic; it reads ERCLALSHPYLYAQLDGPR. The helical transmembrane segment at 135-158 threads the bilayer; the sequence is RARLALPAIYAFCTIFCSLPFLGL. At 159-181 the chain is on the extracellular side; that stretch reads GQHQQYCPGSWCFIRMRSAEPGG. The helical transmembrane segment at 182 to 208 threads the bilayer; sequence CAFLLAYASLVALLVAAIVLCNGSVTL. The Cytoplasmic segment spans residues 209–234; it reads SLCRMYRQQRRHQARCPRPRAGEDEV. Residues 235-259 form a helical membrane-spanning segment; sequence DHLILLALMTGIMAVCSLPLTPQIR. Residues 260–273 are Extracellular-facing; sequence GFTQAIAPDSSEMG. Residues 274 to 294 form a helical membrane-spanning segment; the sequence is DLLAFRFNAFNPILDPWVFIL. The Cytoplasmic segment spans residues 295 to 385; the sequence is FRKSVFQRLK…AGSEAACSLC (91 aa). Residues 315 to 344 are disordered; that stretch reads AQGDSRTSLSQSASGRKDSSAPPALEGKKG. The segment covering 318–328 has biased composition (polar residues); that stretch reads DSRTSLSQSAS. Residue Cys-382 is modified to Cysteine methyl ester. Cys-382 carries the S-farnesyl cysteine lipid modification. Residues 383–385 constitute a propeptide, removed in mature form; it reads SLC.

The protein belongs to the G-protein coupled receptor 1 family. In terms of assembly, interacts (non-isoprenylated C-terminus) with PDZK1. Isoprenylation does not influence ligand binding but is required for efficient coupling to the effectors adenylyl cyclase and phospholipase C.

It localises to the cell membrane. In terms of biological role, receptor for prostacyclin (prostaglandin I2 or PGI2). The activity of this receptor is mediated by G(s) proteins which activate adenylate cyclase. The chain is Prostacyclin receptor (PTGIR) from Bos taurus (Bovine).